Reading from the N-terminus, the 64-residue chain is Crotamine CRO3 (64 aa).

Residues 1-22 (MILYLLFAFLFLAFLSEPGNAY) form the signal peptide. 3 disulfides stabilise this stretch: C25/C57, C32/C51, and C39/C58.

The protein belongs to the crotamine-myotoxin family. As to quaternary structure, monomer. As to expression, expressed by the venom gland.

It is found in the secreted. Functionally, cationic peptide that possesses multiple functions. It acts as a cell-penetrating peptide (CPP), and as a potent voltage-gated potassium channel (Kv) inhibitor. It exhibits antimicrobial activities, hind limb paralysis, and severe muscle necrosis by a non-enzymatic mechanism. This Crotalus durissus terrificus (South American rattlesnake) protein is Crotamine CRO3 (CRO3).